The sequence spans 314 residues: Inosine-uridine preferring nucleoside hydrolase (314 aa).

Position 10 (Asp10) interacts with Ca(2+). Asp14 lines the substrate pocket. Residues Asp15 and Thr126 each coordinate Ca(2+). Asn160, Glu166, and Asn168 together coordinate substrate. His240 acts as the Proton donor in catalysis. Residue Asp241 coordinates Ca(2+).

Belongs to the IUNH family. Homotetramer. It depends on Ca(2+) as a cofactor.

The enzyme catalyses inosine + H2O = hypoxanthine + D-ribose. The catalysed reaction is uridine + H2O = D-ribose + uracil. It participates in purine metabolism; purine nucleoside salvage. With respect to regulation, is potently inhibited by immucillin A and immucillin ACAP, which are transition state inhibitors. Catalyzes the hydrolysis of the N-glycosidic bond of all of the commonly occurring purine and pyrimidine nucleosides into ribose and the associated base, but has a preference for inosine and uridine as substrates. Likely functions in purine salvage from the host, a fundamental pathway since protozoan parasites such as L.major are incapable of de novo purine biosynthesis. The sequence is that of Inosine-uridine preferring nucleoside hydrolase (NSNH) from Leishmania major.